Here is a 219-residue protein sequence, read N- to C-terminus: Agamous-like MADS-box protein AGL19 (219 aa).

An MADS-box domain is found at M1–S61. Residues G77–L96 are disordered. The K-box domain maps to S86–A176.

As to quaternary structure, interacts with SOC1 and AGL21. Mostly expressed in the outer layers of the root meristem (lateral root cap and epidermis) and in the central cylinder cells of mature roots. Also present in rosette leaves and seedlings and, to a lesser extent, in cauline leaves and flowers. Enriched in apices including the shoot apical meristem and developing leaf primordia.

It localises to the nucleus. Functionally, probable transcription factor that promotes flowering, especially in response to vernalization by short periods of cold, in an FLC-inpedendent manner. In Arabidopsis thaliana (Mouse-ear cress), this protein is Agamous-like MADS-box protein AGL19 (AGL19).